Here is a 259-residue protein sequence, read N- to C-terminus: UPF0246 protein VF_2109 (259 aa).

It belongs to the UPF0246 family.

The chain is UPF0246 protein VF_2109 from Aliivibrio fischeri (strain ATCC 700601 / ES114) (Vibrio fischeri).